A 294-amino-acid chain; its full sequence is Flavin-dependent thymidylate synthase (294 aa).

Residues Gly-27–Tyr-250 form the ThyX domain. FAD-binding positions include Thr-73, Arg-96 to Arg-98, and Glu-104. DUMP contacts are provided by residues Gln-93–Arg-96, Glu-104–Arg-108, and Arg-189. Positions Arg-96 to Ser-106 match the ThyX motif motif. Residues Asn-205–His-207 and His-211 contribute to the FAD site. DUMP is bound at residue Arg-216. Catalysis depends on Arg-216, which acts as the Involved in ionization of N3 of dUMP, leading to its activation.

It belongs to the thymidylate synthase ThyX family. Homotetramer. Requires FAD as cofactor.

The enzyme catalyses dUMP + (6R)-5,10-methylene-5,6,7,8-tetrahydrofolate + NADPH + H(+) = dTMP + (6S)-5,6,7,8-tetrahydrofolate + NADP(+). Its pathway is pyrimidine metabolism; dTTP biosynthesis. Catalyzes the reductive methylation of 2'-deoxyuridine-5'-monophosphate (dUMP) to 2'-deoxythymidine-5'-monophosphate (dTMP) while utilizing 5,10-methylenetetrahydrofolate (mTHF) as the methyl donor, and NADPH and FADH(2) as the reductant. This chain is Flavin-dependent thymidylate synthase, found in Rickettsia bellii (strain RML369-C).